The chain runs to 411 residues: uncharacterized protein (411 aa).

The segment at 32–108 (LGGDPAPKPT…PEHPRRIPIP (77 aa)) is disordered.

This is an uncharacterized protein from Ictalurid herpesvirus 1 (strain Auburn) (IcHV-1).